Reading from the N-terminus, the 69-residue chain is Small integral membrane protein 20 (69 aa).

Over 1–8 (MAAARNLR) the chain is Mitochondrial matrix. Residues 9-29 (TALIFGGFISMVGAAFYPIYF) form a helical membrane-spanning segment. Over 30 to 69 (RPLLRLEEYQKEQAVNRAGIVQEDVQPPGLKVWSDPFGRK) the chain is Mitochondrial intermembrane. At phenylalanine 66 the chain carries Phenylalanine amide.

As to quaternary structure, component of the MITRAC (mitochondrial translation regulation assembly intermediate of cytochrome c oxidase complex) complex, the core components of this complex being Coa3/Mitrac12 and Cox14. Interacts with Coa3/Mitrac12 and Cox4i1. Directly interacts with newly synthesized Mt-Co1/Cox1. In terms of tissue distribution, highly expressed in the hypothalamus, substantia nigra reticulata, Edinger-Westphal nucleus, and nucleus of the solitary tract/dorsal motor nucleus of the vagus, the spinal cord, and sensory ganglia (at protein level). Also expressed in the heart, thymus, esophagus, stomach, spleen, lung, pituitary gland, kidney, jejunum, duodenum, ileum, cerebrum, pons, and colon (at protein level). Expressed in preadipocytes and apidocytes (at protein level). Expressed in pancreatic islet cells (at protein level).

Its subcellular location is the mitochondrion inner membrane. It localises to the secreted. Component of the MITRAC (mitochondrial translation regulation assembly intermediate of cytochrome c oxidase complex) complex, that regulates cytochrome c oxidase assembly. Promotes the progression of complex assembly after the association of Mt-Co1/Cox11 with Cox4I1 and Cox6c. Chaperone-like assembly factor required to stabilize newly synthesized Mt-Co1/Cox1 and to prevent its premature turnover. In terms of biological role, peptide involved in a broad spectrum of regulatory functions. Is a ligand for GPR173. As part of the reproductive cycle, it regulates gonadotropin-releasing hormone (GnRH) signaling in the hypothalamus and pituitary gland which augments the release of luteinizing hormone. More specifically, it regulates the expression of transcription factors CEBPB and POU2F1/OCT1 through the cAMP-PKA signaling pathway, which subsequently regulate the expression of GNRHR and KISS1. Plays a protective role in memory retention through activation of GNRHR. Regulates the secretion of AVP by hypothalamic neurons. Plays a role in the transduction of the itch sensation. Induces anxiolytic effects, reducing behavior associated with anxiety. Regulates food intake as well as satiation and satiety by increasing NUCB2 expression in neurons. In the ovary, it regulates follicular growth by stimulating granulosa cell proliferation by increasing the expression of GPR173, CREB1, CYP19A1, KITLG, FSHR, and LHCGR. It also increases the production of estradiol (E2). In the heart, it regulates contractility and relaxation by activating the AKT1-NOS3 and MAPK1-MAPK3 signaling pathways. It also plays a cardioprotective role during ischemia, where it activates the SAFE and RISK pathways. Stimulates the proliferation and differentiation of preadipocytes. In pancreatic islet cells, it induces proliferation of islet cells as well as the production of INS1 and INS2 through activation of the MAPK1-MAPK3 signaling pathways. The polypeptide is Small integral membrane protein 20 (Rattus norvegicus (Rat)).